The sequence spans 217 residues: Probable GTP-binding protein EngB (217 aa).

Residues 29–213 form the EngB-type G domain; the sequence is GPSEVAFAGR…RQAIAQTVGI (185 aa). Residues 37–44, 64–68, 91–94, 158–161, and 192–194 each bind GTP; these read GRSNVGKS, GRTQE, DMPG, TKTD, and TSS. Positions 44 and 66 each coordinate Mg(2+).

Belongs to the TRAFAC class TrmE-Era-EngA-EngB-Septin-like GTPase superfamily. EngB GTPase family. The cofactor is Mg(2+).

In terms of biological role, necessary for normal cell division and for the maintenance of normal septation. The polypeptide is Probable GTP-binding protein EngB (Rhizobium etli (strain CIAT 652)).